Reading from the N-terminus, the 298-residue chain is Elongation factor Ts (298 aa).

The interval 79–82 is involved in Mg(2+) ion dislocation from EF-Tu; it reads TDFV.

This sequence belongs to the EF-Ts family.

The protein localises to the cytoplasm. Associates with the EF-Tu.GDP complex and induces the exchange of GDP to GTP. It remains bound to the aminoacyl-tRNA.EF-Tu.GTP complex up to the GTP hydrolysis stage on the ribosome. The protein is Elongation factor Ts of Cereibacter sphaeroides (strain ATCC 17025 / ATH 2.4.3) (Rhodobacter sphaeroides).